Reading from the N-terminus, the 125-residue chain is Small ribosomal subunit protein uS12 (125 aa).

D89 carries the 3-methylthioaspartic acid modification. The segment at 100–125 is disordered; it reads GSLDTQGVQNRKQARSKYGAKRPKKA. The span at 111–125 shows a compositional bias: basic residues; it reads KQARSKYGAKRPKKA.

The protein belongs to the universal ribosomal protein uS12 family. As to quaternary structure, part of the 30S ribosomal subunit. Contacts proteins S8 and S17. May interact with IF1 in the 30S initiation complex.

Functionally, with S4 and S5 plays an important role in translational accuracy. Its function is as follows. Interacts with and stabilizes bases of the 16S rRNA that are involved in tRNA selection in the A site and with the mRNA backbone. Located at the interface of the 30S and 50S subunits, it traverses the body of the 30S subunit contacting proteins on the other side and probably holding the rRNA structure together. The combined cluster of proteins S8, S12 and S17 appears to hold together the shoulder and platform of the 30S subunit. The protein is Small ribosomal subunit protein uS12 of Thioalkalivibrio sulfidiphilus (strain HL-EbGR7).